The sequence spans 764 residues: Kinesin-like protein KIN-14N (764 aa).

The segment at 1-50 (MSTRATRPGMLHQKENAADAQAGKRQRTAAGSAARAPLSANAAPPAPDPA) is disordered. Residues 29–50 (AAGSAARAPLSANAAPPAPDPA) show a composition bias toward low complexity. Residues 105 to 416 (AEIGKLNGLL…RLHNTILELK (312 aa)) adopt a coiled-coil conformation. The Kinesin motor domain maps to 418–747 (NIRVFCRVRP…LRFAARVNSC (330 aa)). 498-505 (GQTGSGKT) contributes to the ATP binding site.

It belongs to the TRAFAC class myosin-kinesin ATPase superfamily. Kinesin family. KIN-14 subfamily.

In Oryza sativa subsp. japonica (Rice), this protein is Kinesin-like protein KIN-14N.